A 527-amino-acid chain; its full sequence is Neutrophil cytosol factor 2 (527 aa).

3 TPR repeats span residues 37-70 (SRICFNVGCIYTILGNLPEAEKAFTKSINRDKHL), 71-104 (AVSYFQRGMLYYQMEKYDSAIKDLKEALTQLRGN), and 121-154 (CEVLYNIAFMYAKREEWKKAEEHLALAVSMKSEP). Position 233 is a phosphothreonine (threonine 233). Residues 240 to 299 (LEGEAHRVLFGFVPETPEELQVMPGNIVFVLKKGNDNWATVMFNGQKGLVPCNYLEPVEL) form the SH3 1 domain. Positions 304 to 345 (QQQPQEETSLESDIPAPPSSSAPGRPQLSPGQKGKEEPKQEI) are disordered. Position 324 is a phosphoserine (serine 324). The segment covering 336–345 (KGKEEPKQEI) has biased composition (basic and acidic residues). Residues 352–430 (SYTLKVHYKY…YCLTLWCENT (79 aa)) form the PB1 domain. A Phosphoserine modification is found at serine 400. The disordered stretch occupies residues 434–457 (QGFPDEPEESKKSDANNQTTEPEL). One can recognise an SH3 2 domain in the interval 458–517 (KEGSKVVALFSYEATQPEDLEFLEGDVILVISTVNEQWLEGECKGKVGIFPKAFVEQHPT).

The protein belongs to the NCF2/NOXA1 family. In terms of assembly, component of the phagocyte NADPH oxidase complex composed of an obligatory core heterodimer formed by the membrane proteins CYBA and CYBB and the cytosolic regulatory subunits NCF1/p47-phox, NCF2/p67-phox, NCF4/p40-phox and the small GTPase RAC1 or RAC2. Part of a cytosolic complex composed at least by NCF1, NCF2 and NCF4. Interacts with NCF4. Interacts (via the C-terminal SH3 domain) with NCF1 (via C-terminus). Interacts with SYTL1 and RAC1. May interact with NOXO1. Interacts with S100A8 and calprotectin (S100A8/9). Interacts with GBP7 (via GB1/RHD3-type G domain). Interacts with CYBB; the interaction is enhanced in the presence of GBP7.

Its subcellular location is the cytoplasm. Its function is as follows. Subunit of the phagocyte NADPH oxidase complex that mediates the transfer of electrons from cytosolic NADPH to O2 to produce the superoxide anion (O2(-)). In the activated complex, electrons are first transferred from NADPH to flavin adenine dinucleotide (FAD) and subsequently transferred via two heme molecules to molecular oxygen, producing superoxide through an outer-sphere reaction. Activation of the NADPH oxidase complex is initiated by the assembly of cytosolic subunits of the NADPH oxidase complex with the core NADPH oxidase complex to form a complex at the plasma membrane or phagosomal membrane. This activation process is initiated by phosphorylation dependent binding of the cytosolic NCF1/p47-phox subunit to the C-terminus of CYBA/p22-phox. This is Neutrophil cytosol factor 2 from Bos taurus (Bovine).